Consider the following 696-residue polypeptide: MAQAGPTPQQAIARLRAEIEQHNIRYYVHDDPSVPDAEYDALMRDLQALEAEHPELVTPDSPTQRVGAAPLAEFGSVRHAVPMLSLGNAFDEEDVRAFDKRVADTLRGAGLLGLDQQVEYFCELKLDGLAISLRYEEGRLAQAATRGDGQTGEDVTANIRTIKGVPLRLHGAPRVLEVRGEVLMNRAEFERLNRTQAARGEKVFVNPRNAAAGSLRQLDPRITAQRPLRFFAYSWGEVHGLPEGMPTRFDEPAPGVRVASTLPRDTHGGMLDWLAELGLPVNLRHNHRERGADGLLAFYERIGKLRADLPYDIDGVVYKVDALPSQRVLGFVARAPRFALAHKFPAEEAVTQLLGIEVQVGRTGAITPVARLAPVFVGGVTVTNATLHNEDEIRRKDVRIGDTVIVRRAGDVIPEVVGPVLEKRPADAREFVMLTACPICGSAIERPESEAIARCTGGLFCAAQRKQTLLHAAGRKALDIEGLGEKLIDQLVDADRVKSLADIYSLTAFELAALERMGKKSAENLVAAIDQARRPALGRLLFALGIRHVGETTARDVARHFGSMERIMDASEEALLAVPDVGGVVAGSIRRFFAEPHNREIVEQLTQQGVHPQAEAEPEGTSLAGKTFVLTGTMPNWTRDEATRRILAAGGKVSGSVSKKTAYLVTGEDAGSKLTKAQELGVPVLDEDGLKALLGL.

NAD(+)-binding positions include 36–40 (DAEYD), 85–86 (SL), and glutamate 123. Lysine 125 serves as the catalytic N6-AMP-lysine intermediate. NAD(+) contacts are provided by arginine 146, glutamate 181, lysine 319, and lysine 343. The Zn(2+) site is built by cysteine 437, cysteine 440, cysteine 455, and cysteine 461. One can recognise a BRCT domain in the interval 618-696 (PEGTSLAGKT…EDGLKALLGL (79 aa)).

The protein belongs to the NAD-dependent DNA ligase family. LigA subfamily. Mg(2+) serves as cofactor. The cofactor is Mn(2+).

It carries out the reaction NAD(+) + (deoxyribonucleotide)n-3'-hydroxyl + 5'-phospho-(deoxyribonucleotide)m = (deoxyribonucleotide)n+m + AMP + beta-nicotinamide D-nucleotide.. Its function is as follows. DNA ligase that catalyzes the formation of phosphodiester linkages between 5'-phosphoryl and 3'-hydroxyl groups in double-stranded DNA using NAD as a coenzyme and as the energy source for the reaction. It is essential for DNA replication and repair of damaged DNA. The chain is DNA ligase from Bordetella pertussis (strain Tohama I / ATCC BAA-589 / NCTC 13251).